The sequence spans 1124 residues: Angiopoietin-1 receptor (1124 aa).

The N-terminal stretch at 1–22 (MDSLASLVLCGVSLLLSGTVEG) is a signal peptide. Topologically, residues 23–748 (AMDLILINSL…ADLGGGKMLL (726 aa)) are extracellular. Cysteine 44 and cysteine 102 are joined by a disulfide. The Ig-like C2-type 1 domain occupies 44–123 (CIASGWRPHE…RTMKMRQQAS (80 aa)). Asparagine 140 and asparagine 158 each carry an N-linked (GlcNAc...) asparagine glycan. 3 consecutive EGF-like domains span residues 210–252 (RCEA…RTCE), 254–299 (ACEL…LQCN), and 301–341 (ACHP…LQCE). 13 disulfides stabilise this stretch: cysteine 211–cysteine 220, cysteine 224–cysteine 233, cysteine 227–cysteine 240, cysteine 242–cysteine 251, cysteine 255–cysteine 264, cysteine 268–cysteine 274, cysteine 280–cysteine 287, cysteine 289–cysteine 298, cysteine 302–cysteine 311, cysteine 315–cysteine 323, cysteine 317–cysteine 329, cysteine 331–cysteine 340, and cysteine 370–cysteine 424. The region spanning 350-440 (PKIVDLPDHI…GMVEKPFNIS (91 aa)) is the Ig-like C2-type 2 domain. N-linked (GlcNAc...) asparagine glycans are attached at residues asparagine 399, asparagine 438, asparagine 464, asparagine 560, asparagine 596, asparagine 649, and asparagine 691. Fibronectin type-III domains are found at residues 447-541 (PLNA…TASI), 545-636 (PPRG…TLSD), and 641-735 (QPEN…LPES). A helical membrane pass occupies residues 749–769 (IAILGSAGMTCLTVLLAFLII). Residues 770 to 1124 (LQLKRANVQR…GIDCSAEEAA (355 aa)) lie on the Cytoplasmic side of the membrane. In terms of domain architecture, Protein kinase spans 824–1096 (IKFQDVIGEG…QILVSLNRML (273 aa)). Residues 830 to 838 (IGEGNFGQV) and lysine 855 contribute to the ATP site. Position 860 is a phosphotyrosine; by autocatalysis (tyrosine 860). The active-site Proton acceptor is the aspartate 964. A phosphotyrosine; by autocatalysis mark is found at tyrosine 992, tyrosine 1102, and tyrosine 1108.

It belongs to the protein kinase superfamily. Tyr protein kinase family. Tie subfamily. As to quaternary structure, homodimer. Heterodimer with TIE1. Interacts with ANGPT1, ANGPT2 and ANGPT4. At cell-cell contacts in quiescent cells, forms a signaling complex composed of ANGPT1 plus TEK molecules from two adjoining cells. In the absence of endothelial cell-cell contacts, interaction with ANGPT1 mediates contacts with the extracellular matrix. Interacts with PTPRB; this promotes endothelial cell-cell adhesion. Interacts with DOK2, GRB2, GRB7, GRB14, PIK3R1 and PTPN11/SHP2. Colocalizes with DOK2 at contacts with the extracellular matrix in migrating cells. Interacts (tyrosine phosphorylated) with TNIP2. Interacts (tyrosine phosphorylated) with SHC1 (via SH2 domain). Proteolytic processing leads to the shedding of the extracellular domain (soluble TIE-2 alias sTIE-2). Post-translationally, autophosphorylated on tyrosine residues in response to ligand binding. Autophosphorylation occurs in trans, i.e. one subunit of the dimeric receptor phosphorylates tyrosine residues on the other subunit. Autophosphorylation occurs in a sequential manner, where Tyr-992 in the kinase activation loop is phosphorylated first, followed by autophosphorylation at Tyr-1108 and at additional tyrosine residues. ANGPT1-induced phosphorylation is impaired during hypoxia, due to increased expression of ANGPT2. Phosphorylation is important for interaction with GRB14, PIK3R1 and PTPN11. Phosphorylation at Tyr-1102 is important for interaction with SHC1, GRB2 and GRB7. Phosphorylation at Tyr-1108 is important for interaction with DOK2 and for coupling to downstream signal transduction pathways in endothelial cells. Dephosphorylated by PTPRB. In terms of processing, ubiquitinated. The phosphorylated receptor is ubiquitinated and internalized, leading to its degradation. In terms of tissue distribution, detected in umbilical vein endothelial cells. Proteolytic processing gives rise to a soluble extracellular domain that is detected in blood plasma (at protein level). Predominantly expressed in endothelial cells and their progenitors, the angioblasts. Has been directly found in placenta and lung, with a lower level in umbilical vein endothelial cells, brain and kidney.

Its subcellular location is the cell membrane. The protein localises to the cell junction. It localises to the focal adhesion. The protein resides in the cytoplasm. It is found in the cytoskeleton. Its subcellular location is the secreted. It carries out the reaction L-tyrosyl-[protein] + ATP = O-phospho-L-tyrosyl-[protein] + ADP + H(+). Its activity is regulated as follows. Angiopoietin binding leads to receptor dimerization and activation by autophosphorylation at Tyr-992 on the kinase activation loop. Inhibited by staurosporine, K252a, PP2, damnacanthal, SB203580, CEP-11207, CEP-11981 and CE-245677. Inhibited by triazine, thienopyrimidine and thiazolopyrimidine derivatives. Tyrosine-protein kinase that acts as a cell-surface receptor for ANGPT1, ANGPT2 and ANGPT4 and regulates angiogenesis, endothelial cell survival, proliferation, migration, adhesion and cell spreading, reorganization of the actin cytoskeleton, but also maintenance of vascular quiescence. Has anti-inflammatory effects by preventing the leakage of pro-inflammatory plasma proteins and leukocytes from blood vessels. Required for normal angiogenesis and heart development during embryogenesis. Required for post-natal hematopoiesis. After birth, activates or inhibits angiogenesis, depending on the context. Inhibits angiogenesis and promotes vascular stability in quiescent vessels, where endothelial cells have tight contacts. In quiescent vessels, ANGPT1 oligomers recruit TEK to cell-cell contacts, forming complexes with TEK molecules from adjoining cells, and this leads to preferential activation of phosphatidylinositol 3-kinase and the AKT1 signaling cascades. In migrating endothelial cells that lack cell-cell adhesions, ANGT1 recruits TEK to contacts with the extracellular matrix, leading to the formation of focal adhesion complexes, activation of PTK2/FAK and of the downstream kinases MAPK1/ERK2 and MAPK3/ERK1, and ultimately to the stimulation of sprouting angiogenesis. ANGPT1 signaling triggers receptor dimerization and autophosphorylation at specific tyrosine residues that then serve as binding sites for scaffold proteins and effectors. Signaling is modulated by ANGPT2 that has lower affinity for TEK, can promote TEK autophosphorylation in the absence of ANGPT1, but inhibits ANGPT1-mediated signaling by competing for the same binding site. Signaling is also modulated by formation of heterodimers with TIE1, and by proteolytic processing that gives rise to a soluble TEK extracellular domain. The soluble extracellular domain modulates signaling by functioning as decoy receptor for angiopoietins. TEK phosphorylates DOK2, GRB7, GRB14, PIK3R1; SHC1 and TIE1. This is Angiopoietin-1 receptor from Homo sapiens (Human).